A 531-amino-acid chain; its full sequence is MKNLLRAINPLNRPQTERLDERQVRNNAGGFVYTVSDESRLTRFLVLGVDGGTFYASAQKHTVQATDFVRELVQRDAALALRVTLDVVRGQRAPKADPALLVLALIAKTAPNAADRKAAWDALPEVARTGTMLLHFLAFADALGGWGRLTRRGVANVYETADVDKLALWAVKYKARDGWSQADALRKAHPKTDDAARNAVLKFMVDGVLPKVDSPALRVIEGHLKATEAQTDAAAAALMQEYRLPLEAVPTHVRGAEVYRAAMQTNGLTWLLRNLGNLGRVGVLTPNDSATVQAVIERLTDPAALKRGRIHPLDALKARLVYAQGQGVRGKGTWLPVPRVVDALEEAFTLAFGNVQPANTRHLLALDVSGSMTCGDVAGVPGLTPNMAAAAMSLIALRTEPDALTMGFAEQFRPLGITPRDTLESAMQKAQSMSFGGTDCAQPILWAAQERLDVDTFVVYTDNETWAGQVHPTVALDQYAQKMGRAPKLIVVGLTATEFSIADPQRRDMLDVVGFDAAAPNVMTAFARGEV.

The region spanning 24–360 is the TROVE domain; it reads VRNNAGGFVY…AFGNVQPANT (337 aa). The interval 128 to 274 is RNA-binding; that stretch reads RTGTMLLHFL…TNGLTWLLRN (147 aa). The tract at residues 352–531 is VWFA-like domain; it reads FGNVQPANTR…VMTAFARGEV (180 aa). A divalent metal cation-binding residues include Ser369, Ser371, and Thr438.

The protein belongs to the Ro 60 kDa family. Forms oligomers upon binding DrY RNA, The multimers are of an average size of 700 kDa and are composed of around 12 molecules of Rsr-DrY RNA.

Its subcellular location is the cytoplasm. In terms of biological role, binds to several small RNAs that accumulate during recovery from UV irradiation. Contributes to the resistance of D.radiodurans to ultraviolet irradiation. This is RNA-binding protein RO60 from Deinococcus radiodurans (strain ATCC 13939 / DSM 20539 / JCM 16871 / CCUG 27074 / LMG 4051 / NBRC 15346 / NCIMB 9279 / VKM B-1422 / R1).